We begin with the raw amino-acid sequence, 420 residues long: Putative kinase Y4mE (420 aa).

Asp-302 serves as the catalytic Proton acceptor.

This sequence belongs to the HipA Ser/Thr kinase family.

The sequence is that of Putative kinase Y4mE from Sinorhizobium fredii (strain NBRC 101917 / NGR234).